Consider the following 302-residue polypeptide: tRNA dimethylallyltransferase 2 (302 aa).

Position 6–13 (6–13 (GPTACGKT)) interacts with ATP. 8–13 (TACGKT) provides a ligand contact to substrate. Interaction with substrate tRNA regions lie at residues 31-34 (DSRQ) and 154-158 (QRAIR).

This sequence belongs to the IPP transferase family. In terms of assembly, monomer. It depends on Mg(2+) as a cofactor.

The catalysed reaction is adenosine(37) in tRNA + dimethylallyl diphosphate = N(6)-dimethylallyladenosine(37) in tRNA + diphosphate. Catalyzes the transfer of a dimethylallyl group onto the adenine at position 37 in tRNAs that read codons beginning with uridine, leading to the formation of N6-(dimethylallyl)adenosine (i(6)A). The chain is tRNA dimethylallyltransferase 2 from Porphyromonas gingivalis (strain ATCC BAA-308 / W83).